A 292-amino-acid polypeptide reads, in one-letter code: MSERLSGHTLLVSLLATPIRHSLSPKMHNEAYAKLGLDYAYLAFEVGTEQLADAVQGIRALGIRGSNVSMPNKEAILPLLDDLSPAAELVGAVNTVVNKDGKGHLVGHITDGIGALRALADEGVSVKNKIITLAGVGGAGKAIAVQLAFDGAKEIRLFNRQATRLSSVQKLVTKLNQLTRTKVTLQDLEDQTAFKEAIRESHLFIDATSVGMKPLENLSLITDPELIRPDLVVFDIVYSPAETKLLAFARQHGAQKVINGLGMVLYQGAEAFKLITGQDMPVDAIKPLLGDK.

Residues 22-24 and Ser-69 contribute to the shikimate site; that span reads SLS. The Proton acceptor role is filled by Lys-73. Positions 94 and 111 each coordinate shikimate. NADP(+) is bound by residues 135–139 and Ile-236; that span reads GVGGA. Residue Tyr-238 participates in shikimate binding. Gly-260 is an NADP(+) binding site.

This sequence belongs to the shikimate dehydrogenase family. In terms of assembly, homodimer.

The catalysed reaction is shikimate + NADP(+) = 3-dehydroshikimate + NADPH + H(+). Its pathway is metabolic intermediate biosynthesis; chorismate biosynthesis; chorismate from D-erythrose 4-phosphate and phosphoenolpyruvate: step 4/7. In terms of biological role, involved in the biosynthesis of the chorismate, which leads to the biosynthesis of aromatic amino acids. Catalyzes the reversible NADPH linked reduction of 3-dehydroshikimate (DHSA) to yield shikimate (SA). This chain is Shikimate dehydrogenase (NADP(+)), found in Streptococcus pyogenes serotype M18 (strain MGAS8232).